The sequence spans 193 residues: Holliday junction branch migration complex subunit RuvA (193 aa).

The segment at 1–64 (MIGRIAGVLL…EDAHLLYGFG (64 aa)) is domain I. Residues 65-139 (TAEERSTFRE…GKIGADLGAM (75 aa)) form a domain II region. The flexible linker stretch occupies residues 139–143 (MAGAA). Positions 144–193 (SASDHASDILNALLALGYSEKEALTAVKNVPAGTGVSEGIKLALKALSKG) are domain III.

This sequence belongs to the RuvA family. As to quaternary structure, homotetramer. Forms an RuvA(8)-RuvB(12)-Holliday junction (HJ) complex. HJ DNA is sandwiched between 2 RuvA tetramers; dsDNA enters through RuvA and exits via RuvB. An RuvB hexamer assembles on each DNA strand where it exits the tetramer. Each RuvB hexamer is contacted by two RuvA subunits (via domain III) on 2 adjacent RuvB subunits; this complex drives branch migration. In the full resolvosome a probable DNA-RuvA(4)-RuvB(12)-RuvC(2) complex forms which resolves the HJ.

The protein resides in the cytoplasm. Functionally, the RuvA-RuvB-RuvC complex processes Holliday junction (HJ) DNA during genetic recombination and DNA repair, while the RuvA-RuvB complex plays an important role in the rescue of blocked DNA replication forks via replication fork reversal (RFR). RuvA specifically binds to HJ cruciform DNA, conferring on it an open structure. The RuvB hexamer acts as an ATP-dependent pump, pulling dsDNA into and through the RuvAB complex. HJ branch migration allows RuvC to scan DNA until it finds its consensus sequence, where it cleaves and resolves the cruciform DNA. In Paraburkholderia phytofirmans (strain DSM 17436 / LMG 22146 / PsJN) (Burkholderia phytofirmans), this protein is Holliday junction branch migration complex subunit RuvA.